Here is a 176-residue protein sequence, read N- to C-terminus: Peptide methionine sulfoxide reductase MsrA (176 aa).

Residue C12 is part of the active site.

This sequence belongs to the MsrA Met sulfoxide reductase family.

It catalyses the reaction L-methionyl-[protein] + [thioredoxin]-disulfide + H2O = L-methionyl-(S)-S-oxide-[protein] + [thioredoxin]-dithiol. It carries out the reaction [thioredoxin]-disulfide + L-methionine + H2O = L-methionine (S)-S-oxide + [thioredoxin]-dithiol. Functionally, has an important function as a repair enzyme for proteins that have been inactivated by oxidation. Catalyzes the reversible oxidation-reduction of methionine sulfoxide in proteins to methionine. The sequence is that of Peptide methionine sulfoxide reductase MsrA from Thermus thermophilus (strain ATCC BAA-163 / DSM 7039 / HB27).